Consider the following 356-residue polypeptide: tRNA-specific 2-thiouridylase MnmA 1 (356 aa).

ATP is bound by residues 8 to 15 and M34; that span reads GMSGGVDS. C103 serves as the catalytic Nucleophile. A disulfide bridge links C103 with C199. Residue G127 participates in ATP binding. Residues 149 to 151 are interaction with tRNA; that stretch reads KDQ. Catalysis depends on C199, which acts as the Cysteine persulfide intermediate. The tract at residues 305-306 is interaction with tRNA; the sequence is RY.

Belongs to the MnmA/TRMU family.

It is found in the cytoplasm. It catalyses the reaction S-sulfanyl-L-cysteinyl-[protein] + uridine(34) in tRNA + AH2 + ATP = 2-thiouridine(34) in tRNA + L-cysteinyl-[protein] + A + AMP + diphosphate + H(+). Catalyzes the 2-thiolation of uridine at the wobble position (U34) of tRNA, leading to the formation of s(2)U34. This is tRNA-specific 2-thiouridylase MnmA 1 from Clostridium botulinum (strain ATCC 19397 / Type A).